The following is a 150-amino-acid chain: UPF0178 protein DMR_20710 (150 aa).

It belongs to the UPF0178 family.

This chain is UPF0178 protein DMR_20710, found in Solidesulfovibrio magneticus (strain ATCC 700980 / DSM 13731 / RS-1) (Desulfovibrio magneticus).